Reading from the N-terminus, the 311-residue chain is Malate dehydrogenase (311 aa).

Residues 7–13 (GAAGGIG) and Asp-34 contribute to the NAD(+) site. The substrate site is built by Arg-81 and Arg-87. NAD(+)-binding positions include Asn-94 and 117–119 (ITN). The substrate site is built by Asn-119 and Arg-153. His-177 acts as the Proton acceptor in catalysis. Residue Met-227 participates in NAD(+) binding.

It belongs to the LDH/MDH superfamily. MDH type 1 family. Homodimer.

The enzyme catalyses (S)-malate + NAD(+) = oxaloacetate + NADH + H(+). In terms of biological role, catalyzes the reversible oxidation of malate to oxaloacetate. In Shewanella loihica (strain ATCC BAA-1088 / PV-4), this protein is Malate dehydrogenase.